The following is a 498-amino-acid chain: ATP synthase subunit beta, chloroplastic (498 aa).

Residue glycine 172 to threonine 179 coordinates ATP.

Belongs to the ATPase alpha/beta chains family. As to quaternary structure, F-type ATPases have 2 components, CF(1) - the catalytic core - and CF(0) - the membrane proton channel. CF(1) has five subunits: alpha(3), beta(3), gamma(1), delta(1), epsilon(1). CF(0) has four main subunits: a(1), b(1), b'(1) and c(9-12).

It is found in the plastid. The protein resides in the chloroplast thylakoid membrane. The enzyme catalyses ATP + H2O + 4 H(+)(in) = ADP + phosphate + 5 H(+)(out). Produces ATP from ADP in the presence of a proton gradient across the membrane. The catalytic sites are hosted primarily by the beta subunits. In Galbulimima belgraveana (Northern pigeonberry ash), this protein is ATP synthase subunit beta, chloroplastic.